The primary structure comprises 136 residues: Large ribosomal subunit protein uL16 (136 aa).

This sequence belongs to the universal ribosomal protein uL16 family. As to quaternary structure, part of the 50S ribosomal subunit.

Functionally, binds 23S rRNA and is also seen to make contacts with the A and possibly P site tRNAs. This Pectobacterium atrosepticum (strain SCRI 1043 / ATCC BAA-672) (Erwinia carotovora subsp. atroseptica) protein is Large ribosomal subunit protein uL16.